The chain runs to 172 residues: MDLKALIRDIPDFPKPGIMFRDITTLLSHGEGLRYTIDTLTEKCQTAGLIPDYVVGMESRGFLFGVPLAYQLQAGFVPVRKPGKLPAAVHQVEYELEYGTDRLEIHQDALADHHRVLIVDDLIATGGTAKATADLLEKIGCEVLGFAFIIELTGLGGREKLPDVPIITLVDY.

Belongs to the purine/pyrimidine phosphoribosyltransferase family. In terms of assembly, homodimer.

It localises to the cytoplasm. The enzyme catalyses AMP + diphosphate = 5-phospho-alpha-D-ribose 1-diphosphate + adenine. Its pathway is purine metabolism; AMP biosynthesis via salvage pathway; AMP from adenine: step 1/1. Functionally, catalyzes a salvage reaction resulting in the formation of AMP, that is energically less costly than de novo synthesis. This Rippkaea orientalis (strain PCC 8801 / RF-1) (Cyanothece sp. (strain PCC 8801)) protein is Adenine phosphoribosyltransferase.